Consider the following 182-residue polypeptide: Peptide methionine sulfoxide reductase MsrA (182 aa).

The active site involves Cys-13.

This sequence belongs to the MsrA Met sulfoxide reductase family.

It carries out the reaction L-methionyl-[protein] + [thioredoxin]-disulfide + H2O = L-methionyl-(S)-S-oxide-[protein] + [thioredoxin]-dithiol. It catalyses the reaction [thioredoxin]-disulfide + L-methionine + H2O = L-methionine (S)-S-oxide + [thioredoxin]-dithiol. Functionally, has an important function as a repair enzyme for proteins that have been inactivated by oxidation. Catalyzes the reversible oxidation-reduction of methionine sulfoxide in proteins to methionine. The sequence is that of Peptide methionine sulfoxide reductase MsrA from Mycobacterium bovis (strain ATCC BAA-935 / AF2122/97).